Here is a 547-residue protein sequence, read N- to C-terminus: Glucose-6-phosphate isomerase (547 aa).

Catalysis depends on E354, which acts as the Proton donor. Residues H385 and K513 contribute to the active site.

This sequence belongs to the GPI family.

Its subcellular location is the cytoplasm. The enzyme catalyses alpha-D-glucose 6-phosphate = beta-D-fructose 6-phosphate. It participates in carbohydrate biosynthesis; gluconeogenesis. It functions in the pathway carbohydrate degradation; glycolysis; D-glyceraldehyde 3-phosphate and glycerone phosphate from D-glucose: step 2/4. Catalyzes the reversible isomerization of glucose-6-phosphate to fructose-6-phosphate. This chain is Glucose-6-phosphate isomerase, found in Erwinia tasmaniensis (strain DSM 17950 / CFBP 7177 / CIP 109463 / NCPPB 4357 / Et1/99).